Reading from the N-terminus, the 970-residue chain is ATP-dependent DNA helicase DDX11 (970 aa).

One can recognise a Helicase ATP-binding domain in the interval 9–445; that stretch reads GAIHFPFPFT…KNLMYLKQIL (437 aa). ATP is bound at residue 44–51; it reads SPTGTGKS. The residue at position 262 (Ser262) is a Phosphoserine. [4Fe-4S] cluster-binding residues include Cys267 and Cys285. Over residues 289–304 the composition is skewed to basic and acidic residues; that stretch reads QRSRHEKKKGAEEEKP. A disordered region spans residues 289–312; sequence QRSRHEKKKGAEEEKPKRRRQEKQ. [4Fe-4S] cluster contacts are provided by Cys315 and Cys350. A DEAH box motif is present at residues 393-396; it reads DEAH. The segment at 818–849 is disordered; that stretch reads TLSPRPGTPREGSGGEPVHEGRQPVHRQGHQA.

It belongs to the DEAD box helicase family. DEAH subfamily. DDX11/CHL1 sub-subfamily. In terms of assembly, associates with the CTF18-RFC complex. Associates with a cohesin complex composed of RAD21, SMC1 proteins and SMC3. Interacts with CHTF18. Interacts with DSCC1. Interacts with FEN1; this interaction is direct and increases flap endonuclease activity of FEN1. Interacts with PCNA. Interacts with POLR1A and UBTF. Interacts with RAD21, SMC1 proteins and SMC3. Interacts with RFC2. Interacts with TIMELESS; this interaction increases recruitment of both proteins onto chromatin in response to replication stress induction by hydroxyurea. (Microbial infection) Interacts with bovine papillomavirus type 1 regulatory protein E2; this interaction stimulates the recruitment of E2 onto mitotic chromosomes. Mg(2+) serves as cofactor. [4Fe-4S] cluster is required as a cofactor. As to expression, expressed in melanoma cells. Not detected in epidermal melanocytes of normal skin (at protein level). Highly expressed in spleen, B-cells, thymus, testis, ovary, small intestine and pancreas. Very low expression seen in brain. Expressed in dividing cells and/or cells undergoing high levels of recombination. No expression detected in cells signaled to terminally differentiate. Expressed weakly in keratinocytes.

The protein resides in the nucleus. The protein localises to the nucleolus. Its subcellular location is the cytoplasm. It localises to the cytoskeleton. It is found in the spindle pole. The protein resides in the midbody. The protein localises to the microtubule organizing center. Its subcellular location is the centrosome. It localises to the chromosome. The catalysed reaction is Couples ATP hydrolysis with the unwinding of duplex DNA at the replication fork by translocating in the 5'-3' direction. This creates two antiparallel DNA single strands (ssDNA). The leading ssDNA polymer is the template for DNA polymerase III holoenzyme which synthesizes a continuous strand.. The enzyme catalyses ATP + H2O = ADP + phosphate + H(+). Its activity is regulated as follows. ATPase activity is stimulated by high magnesium salt levels (up to a 0.1 M), and potassium salts (glutamate, chloride or acetate) are more effective than the corresponding sodium salts. ATPase activity is enhanced by the long non-coding RNA (lncRNA) cohesion regulator noncoding RNA (CONCR). Double-stranded DNA helicase activity is maximal with magnesium ions at low concentrations (0.5-1 mM) whereas is markedly inhibited at higher levels (5 mM and above). Double-stranded DNA helicase activity is stimulated by 25-50 mM potassium acetate, stimulated to a lesser extent by 25 mM of ammonium acetate, and markedly inhibited by sodium acetate. DNA-dependent ATPase and ATP-dependent DNA helicase that participates in various functions in genomic stability, including DNA replication, DNA repair and heterochromatin organization as well as in ribosomal RNA synthesis. Its double-stranded DNA helicase activity requires either a minimal 5'-single-stranded tail length of approximately 15 nt (flap substrates) or 10 nt length single-stranded gapped DNA substrates of a partial duplex DNA structure for helicase loading and translocation along DNA in a 5' to 3' direction. The helicase activity is capable of displacing duplex regions up to 100 bp, which can be extended up to 500 bp by the replication protein A (RPA) or the cohesion CTF18-replication factor C (Ctf18-RFC) complex activities. Also shows ATPase- and helicase activities on substrates that mimic key DNA intermediates of replication, repair and homologous recombination reactions, including forked duplex, anti-parallel G-quadruplex and three-stranded D-loop DNA molecules. Plays a role in DNA double-strand break (DSB) repair at the DNA replication fork during DNA replication recovery from DNA damage. Recruited with TIMELESS factor upon DNA-replication stress response at DNA replication fork to preserve replication fork progression, and hence ensure DNA replication fidelity. Also cooperates with TIMELESS factor during DNA replication to regulate proper sister chromatid cohesion and mitotic chromosome segregation. Stimulates 5'-single-stranded DNA flap endonuclease activity of FEN1 in an ATP- and helicase-independent manner; and hence it may contribute in Okazaki fragment processing at DNA replication fork during lagging strand DNA synthesis. Its ability to function at DNA replication fork is modulated by its binding to long non-coding RNA (lncRNA) cohesion regulator non-coding RNA DDX11-AS1/CONCR, which is able to increase both DDX11 ATPase activity and binding to DNA replicating regions. Also plays a role in heterochromatin organization. Involved in rRNA transcription activation through binding to active hypomethylated rDNA gene loci by recruiting UBTF and the RNA polymerase Pol I transcriptional machinery. Plays a role in embryonic development and prevention of aneuploidy. Involved in melanoma cell proliferation and survival. Associates with chromatin at DNA replication fork regions. Binds to single- and double-stranded DNAs. In terms of biological role, (Microbial infection) Required for bovine papillomavirus type 1 regulatory protein E2 loading onto mitotic chromosomes during DNA replication for the viral genome to be maintained and segregated. The polypeptide is ATP-dependent DNA helicase DDX11 (Homo sapiens (Human)).